Here is a 113-residue protein sequence, read N- to C-terminus: Stigma/stylar cysteine-rich adhesin (113 aa).

A signal peptide spans 1–22 (MARSSAVCFLLLLAFLIGTASA). 4 cysteine pairs are disulfide-bonded: C25-C72, C35-C49, C50-C95, and C70-C109.

This sequence belongs to the plant LTP family. As to expression, highly expressed in style and stigma, abundant in young leaves and petals, and low expression in young anthers at pollen mother cell stage with an active tapetum. Not expressed in mature leaves or in pollen grains or tubes. Found in the stylar transmitting tract epidermis and in the stylar extracellular matrix.

Its function is as follows. Acts as an adhesive agent between the pollen tube wall and the stylar transmitting tract epidermis. Binds a stylar pectin in a pH-dependent manner. Enhances activity of chemocyanin, a diffusible chemotropic factor. The sequence is that of Stigma/stylar cysteine-rich adhesin (SCA) from Lilium longiflorum (Trumpet lily).